The sequence spans 277 residues: MHVFDNNGIELKAECSIGEEDGVYGLILESWGPGDRNKDYNIALDYIIERLVDSGVSQVVVYLASSSVRKHMHSLDERKIHPGEYFTLIGNSPRDIRLKMCGYQAYFSRTGRKEIPSGNRTKRILINVPGIYSDSFWASIIRGELSELSQPTDDESLLNMRVSKLIKKTLSQPEGSRKPVEVERLQKVYVRDPMVKAWILQQSKGICENCGKNAPFYLNDGNPYLEVHHVIPLSSGGADTTDNCVALCPNCHRELHYSKNAKELIEMLYVNINRLQK.

One can recognise an HNH domain in the interval Cys207–Tyr257.

Functionally, restriction of 5-methyl and 5-hydroxymethylcytosines at the specific DNA sequence 5'-C(me)CGG-3'. The polypeptide is Type IV methyl-directed restriction enzyme EcoKMcrA (Escherichia coli (strain K12)).